The sequence spans 71 residues: Large ribosomal subunit protein bL31 (71 aa).

The protein belongs to the bacterial ribosomal protein bL31 family. Type A subfamily. In terms of assembly, part of the 50S ribosomal subunit.

Functionally, binds the 23S rRNA. The protein is Large ribosomal subunit protein bL31 (rpmE) of Mycoplasmopsis synoviae (strain 53) (Mycoplasma synoviae).